The following is a 1370-amino-acid chain: DNA-directed RNA polymerase subunit beta (1370 aa).

It belongs to the RNA polymerase beta chain family. In terms of assembly, the RNAP catalytic core consists of 2 alpha, 1 beta, 1 beta' and 1 omega subunit. When a sigma factor is associated with the core the holoenzyme is formed, which can initiate transcription.

The catalysed reaction is RNA(n) + a ribonucleoside 5'-triphosphate = RNA(n+1) + diphosphate. DNA-dependent RNA polymerase catalyzes the transcription of DNA into RNA using the four ribonucleoside triphosphates as substrates. The protein is DNA-directed RNA polymerase subunit beta of Geobacter metallireducens (strain ATCC 53774 / DSM 7210 / GS-15).